The chain runs to 134 residues: MFACRTLCLVVVMVASLGTSGVGGRSVEGVSRMEKLLSSSISPSSTPLGFLSQDHSVNKRQVFDQACKGVYDRNLFKKLNRVCEDCYNLYRKPFIVTTCRENCYSNRVFRQCLDDLLLSDVIDEYVSNVQMVGK.

A signal peptide spans 1–24 (MFACRTLCLVVVMVASLGTSGVGG). Gln-61 is modified (pyrrolidone carboxylic acid). Residue Phe-63 is modified to D-phenylalanine; in form CHH-B-II. 3 disulfide bridges follow: Cys-67-Cys-103, Cys-83-Cys-99, and Cys-86-Cys-112. Val-132 is subject to Valine amide.

It belongs to the arthropod CHH/MIH/GIH/VIH hormone family. Post-translationally, stereoinversion of L-Phe (form CHH-B-I) to D-Phe (form CHH-B-II). As to expression, produced by the medulla terminalis X-organ in the eyestalks and transported to the sinus gland where they are stored and released. Present also in the ventral nervous system.

Its subcellular location is the secreted. In terms of biological role, hormone found in the sinus gland of isopods and decapods which controls the blood sugar level. Has a secretagogue action over the amylase released from the midgut gland. May act as a stress hormone and may be involved in the control of molting and reproduction. The sequence is that of Crustacean hyperglycemic hormones isoform B from Homarus americanus (American lobster).